The primary structure comprises 627 residues: MIRYTVAGHSRRCVVGASKRVGAIKCITVAATKRFISNKPNEVFTKLTNDNDPKRDAFFKYTWGSWLKNDKQEKEKRFTKFSIEGLNRILNDIYIQSNEMAKAPDGKILPPVFNKNLTVSLVNNVVPKNIGKINPNEKVQVTTLSSIHEGKHHRIYKVDTNLNKAFILRIPYPLENENTLSYRIRSEVATMDFADLKLGIKVPKIFCYGVNSLNPVRQPFVLQEFIEGELLMKDWDPLIEDGSSNQKKYDNVIKQVSDFQSKLVSLKLNAFGSIYFNNDLKDGNEKEFVKEDIYDGETNPDLQNRWKIGPSVERCLWRHKSHLDFHKQMKPFLGPWSKKSPMDIIKNTGLLEAENAKTRIAMKEAGSSAELMYPRTLKEQITTYENLAKIAPDLFNVKTKAIPNMQELLSPRLFHPDLDPMNIIVNKEAQEAYLLDFEGACTKPFILQNSPQFIAYDGPKIYDLKEDITDFDKLSEAEKVQYQFMYKRTRNQHQWEKKLNDNNPKLITAVAPPVKLLRSPYIAAVERKTEEEYLLIDESLLQLKEVWDIFAQNDLVNQKKFPLNYSKEDIERHVEDLQKLHEKLISTPFAATQGWIPQDMFDQLLNSGSIVKQENGDYTVKQPEATK.

Residues 1–43 (MIRYTVAGHSRRCVVGASKRVGAIKCITVAATKRFISNKPNEV) constitute a mitochondrion transit peptide.

This sequence belongs to the AIM9 family.

The protein resides in the mitochondrion. The polypeptide is Altered inheritance of mitochondria protein 9, mitochondrial (AIM9) (Saccharomyces cerevisiae (strain RM11-1a) (Baker's yeast)).